Consider the following 301-residue polypeptide: Glycosyltransferase GlyG (301 aa).

Belongs to the glycosyltransferase 2 family.

Its pathway is protein modification; protein glycosylation. In terms of biological role, involved in the polymorphic O-glycosylation of the serine-rich repeat protein PsrP. Catalyzes the third step in glycosylation PsrP in this bacteria. Transfers glucose from UDP-glucose to the terminal glucose moiety of already-glycosylated PsrP (using truncated substrates with PsrP SSR1-GlcNAc-Glc). Has a marked preference for PsrP substrate that has already been modified by GlcNAc and glucose. In vitro has hydrolytic activity against UDP-glucose and to a lesser extent against UDP-galactose. Functionally, also catalyzes the fourth step in glycosylation of the serine-rich repeat protein PsrP in this bacteria. Can transfer the sugar from UDP-glucose (and much less well from UDP-galactose) to the terminal sugar moiety of PsrP-GlcNAc-Glc-Gal or of PsrP-GlcNAc-Glc-Glc. In Streptococcus pneumoniae serotype 4 (strain ATCC BAA-334 / TIGR4), this protein is Glycosyltransferase GlyG.